Reading from the N-terminus, the 487-residue chain is UDP-N-acetylmuramate--L-alanine ligase (487 aa).

130–136 (GTHGKTT) is an ATP binding site.

The protein belongs to the MurCDEF family.

It localises to the cytoplasm. The enzyme catalyses UDP-N-acetyl-alpha-D-muramate + L-alanine + ATP = UDP-N-acetyl-alpha-D-muramoyl-L-alanine + ADP + phosphate + H(+). It participates in cell wall biogenesis; peptidoglycan biosynthesis. Its function is as follows. Cell wall formation. The protein is UDP-N-acetylmuramate--L-alanine ligase of Photobacterium profundum (strain SS9).